We begin with the raw amino-acid sequence, 537 residues long: O-phosphoserine--tRNA(Cys) ligase (537 aa).

Substrate-binding positions include 186 to 188, 231 to 233, 273 to 274, and N317; these read HMT, SAS, and YY.

Belongs to the class-II aminoacyl-tRNA synthetase family. O-phosphoseryl-tRNA(Cys) synthetase subfamily. As to quaternary structure, homotetramer. Interacts with SepCysS.

The enzyme catalyses tRNA(Cys) + O-phospho-L-serine + ATP = O-phospho-L-seryl-tRNA(Cys) + AMP + diphosphate. Functionally, catalyzes the attachment of O-phosphoserine (Sep) to tRNA(Cys). The chain is O-phosphoserine--tRNA(Cys) ligase from Methanococcus maripaludis (strain C6 / ATCC BAA-1332).